We begin with the raw amino-acid sequence, 855 residues long: Axonemal dynein light chain domain-containing protein 1 (855 aa).

Residues 1-17 (MSLPKTPSTPLNSASTS) show a composition bias toward polar residues. The interval 1–31 (MSLPKTPSTPLNSASTSESKKLVSVATEGTR) is disordered. Coiled-coil stretches lie at residues 316-402 (QRIL…WSSA), 451-480 (LQKL…RETL), and 571-596 (SERQ…RING).

The protein localises to the cytoplasm. In terms of biological role, may be essential for spermiogenesis and male fertility probably by regulating the manchette dynamics, spermatid head shaping and sperm flagellum assembly. The polypeptide is Axonemal dynein light chain domain-containing protein 1 (AXDND1) (Macaca fascicularis (Crab-eating macaque)).